The chain runs to 129 residues: Small ribosomal subunit protein uS11 (129 aa).

This sequence belongs to the universal ribosomal protein uS11 family. Part of the 30S ribosomal subunit. Interacts with proteins S7 and S18. Binds to IF-3.

Its function is as follows. Located on the platform of the 30S subunit, it bridges several disparate RNA helices of the 16S rRNA. Forms part of the Shine-Dalgarno cleft in the 70S ribosome. This chain is Small ribosomal subunit protein uS11, found in Paracoccus denitrificans (strain Pd 1222).